Here is a 162-residue protein sequence, read N- to C-terminus: MFKKFSALFTLLFTLCLVNPMLVYSIDLDENTRSVPLDDAGNTVILTPEQVKRGKRLFNASCGQCHVGGITKTNPNLGLEPDALSLATPARDNINALVDYMKNPTSYDGLESIAEVHPSIKSADIFPKMRSLSDEDLFAIGGHILLQPKLSSEKWGGGKIYY.

An N-terminal signal peptide occupies residues Met1 to Ser25. 4 residues coordinate heme c: Cys62, Cys65, His66, and His117.

It belongs to the cytochrome c family. PsbV subfamily. PSII is composed of 1 copy each of membrane proteins PsbA, PsbB, PsbC, PsbD, PsbE, PsbF, PsbH, PsbI, PsbJ, PsbK, PsbL, PsbM, PsbT, PsbX, PsbY, PsbZ, Psb30/Ycf12, at least 3 peripheral proteins of the oxygen-evolving complex and a large number of cofactors. It forms dimeric complexes. Heme c is required as a cofactor.

It localises to the plastid. The protein resides in the chloroplast thylakoid membrane. Functionally, one of the extrinsic, lumenal subunits of photosystem II (PSII). PSII is a light-driven water plastoquinone oxidoreductase, using light energy to abstract electrons from H(2)O, generating a proton gradient subsequently used for ATP formation. The extrinsic proteins stabilize the structure of photosystem II oxygen-evolving complex (OEC), the ion environment of oxygen evolution and protect the OEC against heat-induced inactivation. The polypeptide is Photosystem II extrinsic protein V (Guillardia theta (Cryptophyte)).